The chain runs to 354 residues: Uroporphyrinogen decarboxylase (354 aa).

Substrate is bound by residues 27–31, F46, D77, Y154, T209, and H327; that span reads RQAGR.

Belongs to the uroporphyrinogen decarboxylase family. Homodimer.

Its subcellular location is the cytoplasm. The catalysed reaction is uroporphyrinogen III + 4 H(+) = coproporphyrinogen III + 4 CO2. The protein operates within porphyrin-containing compound metabolism; protoporphyrin-IX biosynthesis; coproporphyrinogen-III from 5-aminolevulinate: step 4/4. In terms of biological role, catalyzes the decarboxylation of four acetate groups of uroporphyrinogen-III to yield coproporphyrinogen-III. This chain is Uroporphyrinogen decarboxylase, found in Photorhabdus laumondii subsp. laumondii (strain DSM 15139 / CIP 105565 / TT01) (Photorhabdus luminescens subsp. laumondii).